Reading from the N-terminus, the 204-residue chain is Large ribosomal subunit protein uL4 (204 aa).

The segment covering 42–52 (GTKAQKSRSQV) has biased composition (polar residues). Residues 42-70 (GTKAQKSRSQVSGTTKKSKKQKGGGARHG) are disordered.

The protein belongs to the universal ribosomal protein uL4 family. In terms of assembly, part of the 50S ribosomal subunit.

One of the primary rRNA binding proteins, this protein initially binds near the 5'-end of the 23S rRNA. It is important during the early stages of 50S assembly. It makes multiple contacts with different domains of the 23S rRNA in the assembled 50S subunit and ribosome. Its function is as follows. Forms part of the polypeptide exit tunnel. The chain is Large ribosomal subunit protein uL4 from Xylella fastidiosa (strain M12).